Here is an 88-residue protein sequence, read N- to C-terminus: Large ribosomal subunit protein bL27 (88 aa).

A disordered region spans residues 1-21; the sequence is MAHKKGQGSTQNNRDSAGRRL.

The protein belongs to the bacterial ribosomal protein bL27 family.

This chain is Large ribosomal subunit protein bL27, found in Helicobacter pylori (strain J99 / ATCC 700824) (Campylobacter pylori J99).